We begin with the raw amino-acid sequence, 388 residues long: Arrestin-C (388 aa).

Belongs to the arrestin family. Homodimer; disulfide-linked in response to retinal illumination. Interacts with CXCR4; the interaction is dependent on the C-terminal phosphorylation of CXCR4 and modulates the calcium ion mobilization activity of CXCR4. Interacts with GPR84. As to expression, inner and outer segments, and the inner plexiform regions of the retina.

It is found in the photoreceptor inner segment. The protein localises to the cell projection. Its subcellular location is the cilium. It localises to the photoreceptor outer segment. Functionally, may play a role in an as yet undefined retina-specific signal transduction. Could bind to photoactivated-phosphorylated red/green opsins. The sequence is that of Arrestin-C (ARR3) from Homo sapiens (Human).